We begin with the raw amino-acid sequence, 156 residues long: Small ribosomal subunit protein uS7 (156 aa).

This sequence belongs to the universal ribosomal protein uS7 family. Part of the 30S ribosomal subunit. Contacts proteins S9 and S11.

In terms of biological role, one of the primary rRNA binding proteins, it binds directly to 16S rRNA where it nucleates assembly of the head domain of the 30S subunit. Is located at the subunit interface close to the decoding center, probably blocks exit of the E-site tRNA. This chain is Small ribosomal subunit protein uS7, found in Synechocystis sp. (strain ATCC 27184 / PCC 6803 / Kazusa).